Consider the following 225-residue polypeptide: Orotate phosphoribosyltransferase (225 aa).

Lys29 is a 5-phospho-alpha-D-ribose 1-diphosphate binding site. 37–38 (FF) lines the orotate pocket. Residues 75–76 (YK), Arg105, Lys106, Lys109, His111, and 130–138 (DDVITAGTS) contribute to the 5-phospho-alpha-D-ribose 1-diphosphate site. Residues Thr134 and Arg162 each coordinate orotate.

Belongs to the purine/pyrimidine phosphoribosyltransferase family. PyrE subfamily. In terms of assembly, homodimer. It depends on Mg(2+) as a cofactor.

It catalyses the reaction orotidine 5'-phosphate + diphosphate = orotate + 5-phospho-alpha-D-ribose 1-diphosphate. It participates in pyrimidine metabolism; UMP biosynthesis via de novo pathway; UMP from orotate: step 1/2. Functionally, catalyzes the transfer of a ribosyl phosphate group from 5-phosphoribose 1-diphosphate to orotate, leading to the formation of orotidine monophosphate (OMP). The protein is Orotate phosphoribosyltransferase of Bordetella petrii (strain ATCC BAA-461 / DSM 12804 / CCUG 43448).